Consider the following 651-residue polypeptide: Beta-glucuronidase (651 aa).

An N-terminal signal peptide occupies residues 1 to 22; it reads MARGSAVAWAALGPLLWGCALG. 3 N-linked (GlcNAc...) asparagine glycosylation sites follow: Asn-173, Asn-272, and Asn-420. Residue Glu-451 is the Proton donor of the active site. A glycan (N-linked (GlcNAc...) asparagine) is linked at Asn-631.

Belongs to the glycosyl hydrolase 2 family. As to quaternary structure, homotetramer. In terms of processing, N-linked glycosylated with 3 to 4 oligosaccharide chains.

It is found in the lysosome. It carries out the reaction a beta-D-glucuronoside + H2O = D-glucuronate + an alcohol. Inhibited by L-aspartic acid. In terms of biological role, plays an important role in the degradation of dermatan and keratan sulfates. The polypeptide is Beta-glucuronidase (GUSB) (Homo sapiens (Human)).